The following is a 37-amino-acid chain: Mating pheromone Er-22 (37 aa).

3 disulfide bridges follow: C3–C18, C10–C32, and C15–C24.

Its subcellular location is the secreted. Its function is as follows. Mating ciliate pheromones (or gamones) are diffusible extracellular communication signals that distinguish different intraspecific classes of cells commonly referred to as 'mating types'. They prepare the latter for conjugation by changing their cell surface properties. This is Mating pheromone Er-22 (MAT22) from Euplotes raikovi.